Consider the following 268-residue polypeptide: Thiazole synthase (268 aa).

K108 (schiff-base intermediate with DXP) is an active-site residue. 1-deoxy-D-xylulose 5-phosphate is bound by residues G169, 195–196, and 217–218; these read AG and NS. Residues 248-268 form a disordered region; that stretch reads RLKENPLASPSSPLDGVISNN. Residues 255 to 268 show a composition bias toward polar residues; it reads ASPSSPLDGVISNN.

Belongs to the ThiG family. In terms of assembly, homotetramer. Forms heterodimers with either ThiH or ThiS.

The protein localises to the cytoplasm. It carries out the reaction [ThiS sulfur-carrier protein]-C-terminal-Gly-aminoethanethioate + 2-iminoacetate + 1-deoxy-D-xylulose 5-phosphate = [ThiS sulfur-carrier protein]-C-terminal Gly-Gly + 2-[(2R,5Z)-2-carboxy-4-methylthiazol-5(2H)-ylidene]ethyl phosphate + 2 H2O + H(+). The protein operates within cofactor biosynthesis; thiamine diphosphate biosynthesis. Functionally, catalyzes the rearrangement of 1-deoxy-D-xylulose 5-phosphate (DXP) to produce the thiazole phosphate moiety of thiamine. Sulfur is provided by the thiocarboxylate moiety of the carrier protein ThiS. In vitro, sulfur can be provided by H(2)S. The chain is Thiazole synthase from Prochlorococcus marinus (strain NATL2A).